A 364-amino-acid polypeptide reads, in one-letter code: tRNA 2-selenouridine synthase (364 aa).

In terms of domain architecture, Rhodanese spans 14–137 (LLADTPLIDV…LRQTAIQATW (124 aa)). The active-site S-selanylcysteine intermediate is C97.

It belongs to the SelU family. As to quaternary structure, monomer.

It catalyses the reaction 5-methylaminomethyl-2-thiouridine(34) in tRNA + selenophosphate + (2E)-geranyl diphosphate + H2O + H(+) = 5-methylaminomethyl-2-selenouridine(34) in tRNA + (2E)-thiogeraniol + phosphate + diphosphate. It carries out the reaction 5-methylaminomethyl-2-thiouridine(34) in tRNA + (2E)-geranyl diphosphate = 5-methylaminomethyl-S-(2E)-geranyl-thiouridine(34) in tRNA + diphosphate. The enzyme catalyses 5-methylaminomethyl-S-(2E)-geranyl-thiouridine(34) in tRNA + selenophosphate + H(+) = 5-methylaminomethyl-2-(Se-phospho)selenouridine(34) in tRNA + (2E)-thiogeraniol. The catalysed reaction is 5-methylaminomethyl-2-(Se-phospho)selenouridine(34) in tRNA + H2O = 5-methylaminomethyl-2-selenouridine(34) in tRNA + phosphate. Its function is as follows. Involved in the post-transcriptional modification of the uridine at the wobble position (U34) of tRNA(Lys), tRNA(Glu) and tRNA(Gln). Catalyzes the conversion of 2-thiouridine (S2U-RNA) to 2-selenouridine (Se2U-RNA). Acts in a two-step process involving geranylation of 2-thiouridine (S2U) to S-geranyl-2-thiouridine (geS2U) and subsequent selenation of the latter derivative to 2-selenouridine (Se2U) in the tRNA chain. In Salmonella dublin (strain CT_02021853), this protein is tRNA 2-selenouridine synthase.